A 241-amino-acid chain; its full sequence is RAD9, HUS1, RAD1-interacting nuclear orphan protein 1 (241 aa).

The span at 1 to 10 (MPPRKKRRQA) shows a compositional bias: basic residues. The disordered stretch occupies residues 1-27 (MPPRKKRRQAAQKPQLLFHQQPLEAPK). An RAD1-binding motif motif is present at residues 56–62 (SWVSPQF). Disordered regions lie at residues 68–134 (SWFP…PLVP) and 157–204 (IPPD…LVTD). The span at 72–87 (GKRKHHHRDHARRSSR) shows a compositional bias: basic residues. The segment covering 100 to 110 (ETPQSSASSAT) has biased composition (polar residues). The D-box motif lies at 129–136 (GRPLVPML). Residues 177-181 (LRENS) carry the KEN box motif. Residues 181–193 (SLPSCSLHTSTPK) show a composition bias toward polar residues.

Interacts (when phosphorylated by PLK1) with POLQ; promoting POLQ recruitment to DNA damage sites. Interacts with RAD1; interaction is direct and promotes association with the 9-1-1 (RAD9-RAD1-HUS1) complex. Interacts with RAD18. Interacts with TOPBP1. Interacts with UBE2N. In terms of processing, phosphorylated by PLK1, promoting interaction with polymerase theta (POLQ). Ubiquitinated and degraded by the APC/C complex upon mitotic exit.

It is found in the nucleus. It localises to the chromosome. Its function is as follows. Involved in microhomology-mediated end-joining (MMEJ) DNA repair by promoting recruitment of polymerase theta (POLQ) to DNA damage sites during mitosis. MMEJ is an alternative non-homologous end-joining (NHEJ) machinery that takes place during mitosis to repair double-strand breaks in DNA that originate in S-phase. Accumulates in M-phase; following phosphorylation by PLK1, interacts with POLQ, enabling its recruitment to double-strand breaks for subsequent repair. Also involved in the DNA damage response (DDR) signaling in response to genotoxic stresses such as ionizing radiation (IR) during the S phase. Recruited to sites of DNA damage through interaction with the 9-1-1 cell-cycle checkpoint response complex and TOPBP1 in a ATR-dependent manner. Required for the progression of the G1 to S phase transition. Plays a role in the stimulation of CHEK1 phosphorylation. The polypeptide is RAD9, HUS1, RAD1-interacting nuclear orphan protein 1 (RHNO1) (Bos taurus (Bovine)).